Reading from the N-terminus, the 168-residue chain is Ribosome maturation factor RimM (168 aa).

One can recognise a PRC barrel domain in the interval 96–168 (VDEYYWGDLI…TIRVDWQKDW (73 aa)).

It belongs to the RimM family. In terms of assembly, binds ribosomal protein uS19.

The protein resides in the cytoplasm. In terms of biological role, an accessory protein needed during the final step in the assembly of 30S ribosomal subunit, possibly for assembly of the head region. Essential for efficient processing of 16S rRNA. May be needed both before and after RbfA during the maturation of 16S rRNA. It has affinity for free ribosomal 30S subunits but not for 70S ribosomes. This is Ribosome maturation factor RimM from Aromatoleum aromaticum (strain DSM 19018 / LMG 30748 / EbN1) (Azoarcus sp. (strain EbN1)).